A 449-amino-acid polypeptide reads, in one-letter code: Phosphoglucosamine mutase (449 aa).

The Phosphoserine intermediate role is filled by serine 103. Mg(2+)-binding residues include serine 103, aspartate 240, aspartate 242, and aspartate 244. At serine 103 the chain carries Phosphoserine.

The protein belongs to the phosphohexose mutase family. Requires Mg(2+) as cofactor. Post-translationally, activated by phosphorylation.

It carries out the reaction alpha-D-glucosamine 1-phosphate = D-glucosamine 6-phosphate. Catalyzes the conversion of glucosamine-6-phosphate to glucosamine-1-phosphate. The chain is Phosphoglucosamine mutase from Thermobifida fusca (strain YX).